Here is a 246-residue protein sequence, read N- to C-terminus: Protein 3F (246 aa).

Residues 1–19 (MKLLSKLILTLALATYASA) form the signal peptide. A glycan (N-linked (GlcNAc...) asparagine) is linked at N52. The span at 113-124 (EVRPIDRLKDNA) shows a compositional bias: basic and acidic residues. The interval 113-223 (EVRPIDRLKD…EEAEHVEKGA (111 aa)) is disordered. Positions 126 to 145 (AANTENAQKSPNTQSTQKGS) are enriched in polar residues. 3 tandem repeats follow at residues 145–153 (SPKSDAKEA), 154–162 (SPKTDAKEA), and 163–171 (SPKSDAKEA). The interval 145 to 176 (SPKSDAKEASPKTDAKEASPKSDAKEASPKTD) is 3.5 X 9 AA tandem repeats of S-P-K-[ST]-D-A-K-E-A. Residues 146-177 (PKSDAKEASPKTDAKEASPKSDAKEASPKTDT) are compositionally biased toward basic and acidic residues. The 4; truncated repeat unit spans residues 172–176 (SPKTD). Over residues 181 to 213 (SSPKTDTKSSTQKPSSSSDSSKAKAEANTAANN) the composition is skewed to low complexity.

The sequence is that of Protein 3F (pspG) from Dictyostelium discoideum (Social amoeba).